Reading from the N-terminus, the 685-residue chain is Sorbicillinoid biosynthetic cluster transcription factor sor4 (685 aa).

Residues M1–T14 are compositionally biased toward low complexity. Residues M1 to L20 form a disordered region. The zn(2)-C6 fungal-type DNA-binding region spans C22–C49. The tract at residues G81–S112 is disordered.

Its subcellular location is the nucleus. Transcription factor that acts as the main regulator of the gene cluster that mediates the biosynthesis of sorbicillinoids, a diverse group of yellow secondary metabolites that restrict growth of competing pathogenic fungi but not of bacteria. The protein is Sorbicillinoid biosynthetic cluster transcription factor sor4 of Hypocrea jecorina (strain QM6a) (Trichoderma reesei).